A 342-amino-acid polypeptide reads, in one-letter code: Phosphoribosylformylglycinamidine cyclo-ligase (342 aa).

This sequence belongs to the AIR synthase family.

Its subcellular location is the cytoplasm. It catalyses the reaction 2-formamido-N(1)-(5-O-phospho-beta-D-ribosyl)acetamidine + ATP = 5-amino-1-(5-phospho-beta-D-ribosyl)imidazole + ADP + phosphate + H(+). It participates in purine metabolism; IMP biosynthesis via de novo pathway; 5-amino-1-(5-phospho-D-ribosyl)imidazole from N(2)-formyl-N(1)-(5-phospho-D-ribosyl)glycinamide: step 2/2. The chain is Phosphoribosylformylglycinamidine cyclo-ligase from Staphylococcus aureus (strain MRSA252).